A 100-amino-acid chain; its full sequence is MICOS complex subunit MIC12 (100 aa).

The chain crosses the membrane as a helical span at residues 10–26; it reads FATISSVAAASLYLYAI.

This sequence belongs to the MICOS complex subunit Mic12 family. In terms of assembly, component of the mitochondrial contact site and cristae organizing system (MICOS) complex.

It is found in the mitochondrion inner membrane. In terms of biological role, component of the MICOS complex, a large protein complex of the mitochondrial inner membrane that plays crucial roles in the maintenance of crista junctions, inner membrane architecture, and formation of contact sites to the outer membrane. The polypeptide is MICOS complex subunit MIC12 (AIM5) (Vanderwaltozyma polyspora (strain ATCC 22028 / DSM 70294 / BCRC 21397 / CBS 2163 / NBRC 10782 / NRRL Y-8283 / UCD 57-17) (Kluyveromyces polysporus)).